A 340-amino-acid chain; its full sequence is Mitochondrial calcium uniporter regulator 1 (340 aa).

The interval 1-44 (MDSGSVAAERPRRTPSRQRLPSSGCGVPARPGVSTLPGGRSWLR) is disordered. Over 1–54 (MDSGSVAAERPRRTPSRQRLPSSGCGVPARPGVSTLPGGRSWLRPRGRAARASP) the chain is Mitochondrial intermembrane. Residues 55 to 74 (LLFLLLVPSPRLAATATATA) traverse the membrane as a helical segment. Over 75–316 (PRRTLAERSR…KTMLEAHKLD (242 aa)) the chain is Mitochondrial matrix. A coiled-coil region spans residues 197–291 (ALQQVLSKIA…VSLHAQQDRA (95 aa)). Lysine 204 bears the N6-acetyllysine mark. A helical transmembrane segment spans residues 317 to 339 (TIKYLAGSVFTCLTVALGFYRLW). Isoleucine 340 is a topological domain (mitochondrial intermembrane).

This sequence belongs to the CCDC90 family. Interacts (via coiled coil regions) with MCU; the interaction is direct. Interacts with SMDT1/EMRE; the interaction is direct. Interacts with PPIF.

The protein localises to the mitochondrion inner membrane. Key regulator of mitochondrial calcium uniporter (MCU) required for calcium entry into mitochondrion. Plays a direct role in uniporter-mediated calcium uptake via a direct interaction with MCU. Probably involved in the assembly of the membrane components of the uniporter complex (uniplex). The chain is Mitochondrial calcium uniporter regulator 1 from Mus musculus (Mouse).